A 503-amino-acid chain; its full sequence is Probable cytosol aminopeptidase (503 aa).

Residues lysine 270 and aspartate 275 each contribute to the Mn(2+) site. Residue lysine 282 is part of the active site. Mn(2+) is bound by residues aspartate 293, aspartate 352, and glutamate 354. Residue arginine 356 is part of the active site.

It belongs to the peptidase M17 family. The cofactor is Mn(2+).

It is found in the cytoplasm. It catalyses the reaction Release of an N-terminal amino acid, Xaa-|-Yaa-, in which Xaa is preferably Leu, but may be other amino acids including Pro although not Arg or Lys, and Yaa may be Pro. Amino acid amides and methyl esters are also readily hydrolyzed, but rates on arylamides are exceedingly low.. The enzyme catalyses Release of an N-terminal amino acid, preferentially leucine, but not glutamic or aspartic acids.. Presumably involved in the processing and regular turnover of intracellular proteins. Catalyzes the removal of unsubstituted N-terminal amino acids from various peptides. The chain is Probable cytosol aminopeptidase from Citrobacter koseri (strain ATCC BAA-895 / CDC 4225-83 / SGSC4696).